The chain runs to 271 residues: Putative cysteine protease YopT-like blr2140 (271 aa).

Positions 1–81 are disordered; the sequence is MYDRIGGSST…STSSPESPAT (81 aa). The segment covering 7 to 29 has biased composition (polar residues); that stretch reads GSSTRTSQTDEPSQSVDSGSFTE. The span at 65-81 shows a compositional bias: low complexity; sequence TSSASEPSTSSPESPAT. Residue Cys100 is part of the active site. Positions 114-136 are disordered; the sequence is SPSTRMSALTPGSQTHASAAERQ. Active-site residues include His213 and Asp228.

Belongs to the peptidase C58 family.

Functionally, potential cysteine protease, which may play a central role after invasion of host cell. This is Putative cysteine protease YopT-like blr2140 from Bradyrhizobium diazoefficiens (strain JCM 10833 / BCRC 13528 / IAM 13628 / NBRC 14792 / USDA 110).